The chain runs to 1128 residues: Mastermind-like protein 2 (1128 aa).

2 disordered regions span residues 1-22 (MGDT…GAGL) and 81-167 (QHGQ…GDQR). Residues 12-22 (GGLGGAPGAGL) are compositionally biased toward gly residues. Over residues 113-122 (PTASQTAAPA) the composition is skewed to low complexity. The residue at position 177 (S177) is a Phosphoserine. Disordered stretches follow at residues 343-509 (FNID…GSNQ), 521-649 (SPSA…SNQP), 677-714 (QVSQ…GYMN), 758-794 (QDQI…GSST), and 1039-1073 (GTGL…QGTD). Polar residues-rich tracts occupy residues 347 to 357 (LGQQSQRSTPR) and 374 to 387 (GLTQ…QLRP). Residues 395–426 (SMASSGLSASSPIPSVPQSQAQPPPATGAARA) show a composition bias toward low complexity. The span at 431–446 (QEVSHAQQLKQIAANR) shows a compositional bias: polar residues. Composition is skewed to low complexity over residues 453-473 (HQQQ…SAGP) and 484-497 (PSPS…SPQS). Polar residues predominate over residues 566-584 (NSDQANQQMPSVLPSQSKP). A compositionally biased stretch (low complexity) spans 590–649 (TQQQPQQSSITVQPQQQQQQPQQQQQPQQQQQPQPQQQQQQQPQAQQPAAQPTQPLSNQP). 3 stretches are compositionally biased toward polar residues: residues 677-695 (QVSQ…QNAG), 778-794 (NVGN…GSST), and 1039-1052 (GTGL…SQPP).

Belongs to the mastermind family. In terms of assembly, interacts through its N-terminal region with the ankyrin repeat region of the Notch proteins NOTCH1, NOTCH2, NOTCH3 and NOTCH4. Forms a DNA-binding complex with Notch proteins and RBPSUH/RBP-J kappa.

The protein localises to the nucleus speckle. Functionally, acts as a transcriptional coactivator for NOTCH proteins. Has been shown to amplify NOTCH-induced transcription of HES1. Potentiates activation by NOTCH3 and NOTCH4 more efficiently than MAML1 or MAML3. This Bos taurus (Bovine) protein is Mastermind-like protein 2 (MAML2).